The primary structure comprises 568 residues: Urease subunit alpha (568 aa).

The Urease domain occupies 130-568; sequence GGIDTHIHFI…LPMAQRYFLF (439 aa). Ni(2+) contacts are provided by histidine 135, histidine 137, and lysine 218. Residue lysine 218 is modified to N6-carboxylysine. Position 220 (histidine 220) interacts with substrate. Ni(2+) contacts are provided by histidine 247 and histidine 273. The active-site Proton donor is the histidine 321. Aspartate 361 provides a ligand contact to Ni(2+).

This sequence belongs to the metallo-dependent hydrolases superfamily. Urease alpha subunit family. In terms of assembly, heterotrimer of UreA (gamma), UreB (beta) and UreC (alpha) subunits. Three heterotrimers associate to form the active enzyme. Ni cation serves as cofactor. Carboxylation allows a single lysine to coordinate two nickel ions.

Its subcellular location is the cytoplasm. It carries out the reaction urea + 2 H2O + H(+) = hydrogencarbonate + 2 NH4(+). The protein operates within nitrogen metabolism; urea degradation; CO(2) and NH(3) from urea (urease route): step 1/1. The sequence is that of Urease subunit alpha from Burkholderia pseudomallei (strain 668).